Here is an 863-residue protein sequence, read N- to C-terminus: DNA mismatch repair protein MutS (863 aa).

Residue 607-614 coordinates ATP; the sequence is GPNMAGKS.

Belongs to the DNA mismatch repair MutS family.

Its function is as follows. This protein is involved in the repair of mismatches in DNA. It is possible that it carries out the mismatch recognition step. This protein has a weak ATPase activity. The protein is DNA mismatch repair protein MutS of Caldicellulosiruptor bescii (strain ATCC BAA-1888 / DSM 6725 / KCTC 15123 / Z-1320) (Anaerocellum thermophilum).